The primary structure comprises 836 residues: RNA-binding protein 12B-A (836 aa).

The region spanning proline 154–glutamate 229 is the RRM 1 domain. The tract at residues glycine 237–serine 277 is disordered. Residues aspartate 244–proline 255 show a composition bias toward basic and acidic residues. Over residues isoleucine 259–serine 277 the composition is skewed to basic residues. 2 RRM domains span residues phenylalanine 283 to arginine 359 and leucine 401 to glutamate 478. 2 disordered regions span residues glycine 539–glutamate 572 and serine 620–arginine 644. The segment covering glutamine 550–glutamate 572 has biased composition (basic and acidic residues). Serine 703 bears the Phosphoserine mark. The residue at position 758 (lysine 758) is an N6-acetyllysine. Positions isoleucine 760–leucine 836 constitute an RRM 4 domain.

This chain is RNA-binding protein 12B-A (Rbm12b1), found in Mus musculus (Mouse).